Reading from the N-terminus, the 210-residue chain is 7-cyano-7-deazaguanine synthase 2 (210 aa).

10 to 20 lines the ATP pocket; that stretch reads HSGGMDSTTCL. Zn(2+)-binding residues include Cys180, Cys193, Cys196, and Cys199.

It belongs to the QueC family. Zn(2+) serves as cofactor.

It carries out the reaction 7-carboxy-7-deazaguanine + NH4(+) + ATP = 7-cyano-7-deazaguanine + ADP + phosphate + H2O + H(+). The protein operates within purine metabolism; 7-cyano-7-deazaguanine biosynthesis. Its function is as follows. Catalyzes the ATP-dependent conversion of 7-carboxy-7-deazaguanine (CDG) to 7-cyano-7-deazaguanine (preQ(0)). The chain is 7-cyano-7-deazaguanine synthase 2 from Rhodopseudomonas palustris (strain HaA2).